A 1857-amino-acid polypeptide reads, in one-letter code: Chitin synthase Y (1857 aa).

Residues Met-1–Pro-22 form a disordered region. The 788-residue stretch at Met-1–Glu-788 folds into the Myosin motor domain. An ATP-binding site is contributed by Gly-102 to Thr-109. A disordered region spans residues Ser-601–Ser-653. An N-linked (GlcNAc...) asparagine glycan is attached at Asn-634. An actin-binding region spans residues Leu-668 to Asp-692. A run of 2 helical transmembrane segments spans residues Trp-898–Gly-918 and Leu-937–Val-957. The region spanning Gln-961–Phe-1020 is the Cytochrome b5 heme-binding domain. Residues Asn-1047 and Asn-1072 are each glycosylated (N-linked (GlcNAc...) asparagine). Residues Phe-1209–Leu-1229 form a helical membrane-spanning segment. N-linked (GlcNAc...) asparagine glycosylation occurs at Asn-1572. Helical transmembrane passes span Leu-1603 to Leu-1623, Ile-1630 to Ile-1650, and Met-1657 to Phe-1677. In terms of domain architecture, DEK-C spans Leu-1799–Ser-1854.

In the N-terminal section; belongs to the TRAFAC class myosin-kinesin ATPase superfamily. Myosin family. The protein in the C-terminal section; belongs to the chitin synthase family. Class V subfamily.

Its subcellular location is the cell membrane. It localises to the cell septum. The protein resides in the cell tip. It carries out the reaction [(1-&gt;4)-N-acetyl-beta-D-glucosaminyl](n) + UDP-N-acetyl-alpha-D-glucosamine = [(1-&gt;4)-N-acetyl-beta-D-glucosaminyl](n+1) + UDP + H(+). Its function is as follows. Polymerizes chitin, a structural polymer of the cell wall and septum, by transferring the sugar moiety of UDP-GlcNAc to the non-reducing end of the growing chitin polymer. Specifically involved in hyphal elongation and new cell wall formation. This Aspergillus oryzae (strain ATCC 42149 / RIB 40) (Yellow koji mold) protein is Chitin synthase Y.